The primary structure comprises 180 residues: Ribulose bisphosphate carboxylase small subunit, chloroplastic 5 (180 aa).

Residues 1 to 56 (MASSVMSSAAVATRGNGAQASMVAPFTGLKSTASFPVSRKQNLDITSIASNGGRVR) constitute a chloroplast transit peptide.

Belongs to the RuBisCO small chain family. Heterohexadecamer of 8 large and 8 small subunits.

It is found in the plastid. Its subcellular location is the chloroplast. In terms of biological role, ruBisCO catalyzes two reactions: the carboxylation of D-ribulose 1,5-bisphosphate, the primary event in carbon dioxide fixation, as well as the oxidative fragmentation of the pentose substrate. Both reactions occur simultaneously and in competition at the same active site. Although the small subunit is not catalytic it is essential for maximal activity. This chain is Ribulose bisphosphate carboxylase small subunit, chloroplastic 5, found in Solanum tuberosum (Potato).